The chain runs to 462 residues: Argininosuccinate lyase (462 aa).

The protein belongs to the lyase 1 family. Argininosuccinate lyase subfamily.

Its subcellular location is the cytoplasm. It catalyses the reaction 2-(N(omega)-L-arginino)succinate = fumarate + L-arginine. It participates in amino-acid biosynthesis; L-arginine biosynthesis; L-arginine from L-ornithine and carbamoyl phosphate: step 3/3. The sequence is that of Argininosuccinate lyase from Streptococcus agalactiae serotype III (strain NEM316).